We begin with the raw amino-acid sequence, 186 residues long: Enhancer of split m7 protein (186 aa).

The region spanning Y13–L68 is the bHLH domain. Residues F83–L116 form the Orange domain. The WRPW motif motif lies at W183–W186.

As to quaternary structure, transcription repression requires formation of a complex with a corepressor protein (Groucho). Forms homodimers.

It is found in the nucleus. Participates in the control of cell fate choice by uncommitted neuroectodermal cells in the embryo. Transcriptional repressor. Binds DNA on N-box motifs: 5'-CACNAG-3'. In Drosophila melanogaster (Fruit fly), this protein is Enhancer of split m7 protein.